The following is a 2924-amino-acid chain: Zinc finger ZZ-type and EF-hand domain-containing protein 1 (2924 aa).

The disordered stretch occupies residues 1–41; it reads MGNAPSNSSEDEAAAAGGEGWSPHQDWAADSGTTPGPGPAA. A lipid anchor (N-myristoyl glycine) is attached at glycine 2. The segment covering 28 to 41 has biased composition (low complexity); it reads AADSGTTPGPGPAA. The region spanning 111 to 146 is the EF-hand domain; that stretch reads CSGEQFEEAFAQFDAEGDGTVDAENMLEALKNSSGA. Positions 226–405 constitute a DOC domain; it reads LVQKEKESPG…AIWYWSLLTS (180 aa). At serine 240 the chain carries Phosphoserine. Over residues 1452–1470 the composition is skewed to basic and acidic residues; sequence HLQPLDRRQRTSSVVEEHF. The interval 1452-1527 is disordered; that stretch reads HLQPLDRRQR…STPTRRPPFT (76 aa). A compositionally biased stretch (low complexity) spans 1472 to 1485; sequence GSASPTEAATPAAG. Phosphoserine is present on residues serine 1475, serine 1488, and serine 1509. Threonine 1510 bears the Phosphothreonine mark. The segment covering 1514-1523 has biased composition (pro residues); it reads PSPPSTPTRR. Position 1515 is a phosphoserine (serine 1515). Threonine 1519 and threonine 1521 each carry phosphothreonine. Serine 1535 and serine 1538 each carry phosphoserine. 2 ZZ-type zinc fingers span residues 1776–1831 and 1825–1880; these read NVDI…FTCD and NMEF…MVTI. The Zn(2+) site is built by cysteine 1781, cysteine 1784, cysteine 1795, cysteine 1798, cysteine 1804, cysteine 1807, histidine 1817, histidine 1821, cysteine 1830, cysteine 1833, cysteine 1844, cysteine 1847, cysteine 1853, cysteine 1856, histidine 1866, and histidine 1870. The interval 2388-2418 is disordered; it reads DLELDERGDQEEELDRPVSSPGEAEQKKLDP. At serine 2407 the chain carries Phosphoserine. Lysine 2630 carries the post-translational modification N6-acetyllysine.

As to quaternary structure, interacts with KLF6 and KLF9. Interacts via (ZZ-type 2 zinc finger) with histone H3 trimethylated at 'Lys-4' (H3K4me3) and histone H3 acetylated at 'Lys-4' (H3K4ac).

In terms of biological role, histone H3 reader which may act as a transcriptional coactivator for KLF6 and KLF9 transcription factors. In Mus musculus (Mouse), this protein is Zinc finger ZZ-type and EF-hand domain-containing protein 1 (Zzef1).